Consider the following 379-residue polypeptide: Putative beta-glucosidase 6 (379 aa).

A signal peptide spans 1–20 (MEKTFALITIFLAFAFSGKC). A beta-D-glucoside is bound by residues Gln-43, His-141, and 186 to 187 (NE). Glu-187 (proton donor) is an active-site residue. Cysteines 206 and 213 form a disulfide. N-linked (GlcNAc...) asparagine glycosylation occurs at Asn-217. Residue Tyr-329 coordinates a beta-D-glucoside. N-linked (GlcNAc...) asparagine glycosylation is present at Asn-362.

Belongs to the glycosyl hydrolase 1 family.

The catalysed reaction is Hydrolysis of terminal, non-reducing beta-D-glucosyl residues with release of beta-D-glucose.. In Arabidopsis thaliana (Mouse-ear cress), this protein is Putative beta-glucosidase 6.